The chain runs to 272 residues: Pyrroline-5-carboxylate reductase (272 aa).

Belongs to the pyrroline-5-carboxylate reductase family.

The protein localises to the cytoplasm. It catalyses the reaction L-proline + NADP(+) = (S)-1-pyrroline-5-carboxylate + NADPH + 2 H(+). The catalysed reaction is L-proline + NAD(+) = (S)-1-pyrroline-5-carboxylate + NADH + 2 H(+). It functions in the pathway amino-acid biosynthesis; L-proline biosynthesis; L-proline from L-glutamate 5-semialdehyde: step 1/1. Functionally, catalyzes the reduction of 1-pyrroline-5-carboxylate (PCA) to L-proline. This Vibrio alginolyticus protein is Pyrroline-5-carboxylate reductase.